The chain runs to 381 residues: Selenoprotein P (381 aa).

The signal sequence occupies residues 1–19 (MWRSLGLALALCLLPLGGT). The N-linked (GlcNAc...) asparagine glycan is linked to asparagine 46. Selenocysteine 59 is a non-standard amino acid (selenocysteine). Residues asparagine 83, asparagine 119, and asparagine 128 are each glycosylated (N-linked (GlcNAc...) asparagine). The tract at residues 202–268 (SPHYHHEHHH…ENRDMPGSED (67 aa)) is disordered. Over residues 204–217 (HYHHEHHHNHRHQH) the composition is skewed to basic residues. A compositionally biased stretch (polar residues) spans 218 to 229 (LGSSELSENQQP). Residues 243–255 (LHHHHKHKGQHRQ) show a composition bias toward basic residues. Serine 266 carries the post-translational modification Phosphoserine. Non-standard amino acids (selenocysteine) are located at selenocysteine 318 and selenocysteine 330. An N-linked (GlcNAc...) asparagine glycan is attached at asparagine 338. 6 non-standard amino acids (selenocysteine) are found at residues selenocysteine 345, selenocysteine 352, selenocysteine 367, selenocysteine 369, selenocysteine 376, and selenocysteine 378. A disordered region spans residues 352–381 (UQISQQLIPTEASTSURUKNQAKKUEUPSN). Residues 353 to 369 (QISQQLIPTEASTSURU) show a composition bias toward polar residues.

This sequence belongs to the selenoprotein P family. Post-translationally, phosphorylation sites are present in the extracellular medium.

The protein localises to the secreted. In terms of biological role, might be responsible for some of the extracellular antioxidant defense properties of selenium or might be involved in the transport of selenium. May supply selenium to tissues such as brain and testis. This is Selenoprotein P from Pongo abelii (Sumatran orangutan).